The sequence spans 201 residues: Glycerol-3-phosphate acyltransferase (201 aa).

5 consecutive transmembrane segments (helical) span residues 5–25, 55–75, 88–108, 118–138, and 164–184; these read LLGA…FGVV, KMGV…ILVA, WVTA…WLGF, LGIF…GYAV, and TYGP…LIFL.

The protein belongs to the PlsY family. Probably interacts with PlsX.

It localises to the cell inner membrane. It carries out the reaction an acyl phosphate + sn-glycerol 3-phosphate = a 1-acyl-sn-glycero-3-phosphate + phosphate. The protein operates within lipid metabolism; phospholipid metabolism. Catalyzes the transfer of an acyl group from acyl-phosphate (acyl-PO(4)) to glycerol-3-phosphate (G3P) to form lysophosphatidic acid (LPA). This enzyme utilizes acyl-phosphate as fatty acyl donor, but not acyl-CoA or acyl-ACP. The polypeptide is Glycerol-3-phosphate acyltransferase (Anaeromyxobacter sp. (strain K)).